The primary structure comprises 75 residues: Conotoxin VnMSGL-0111 (75 aa).

The signal sequence occupies residues 1 to 20 (MSGLEIMVLTLLLLVSMATS). The propeptide occupies 21–44 (HQDGGEKQATQRDAINVRRRSITR). Intrachain disulfides connect cysteine 48–cysteine 60, cysteine 52–cysteine 69, and cysteine 59–cysteine 73.

Belongs to the conotoxin O3 superfamily. Expressed by the venom duct.

The protein resides in the secreted. The protein is Conotoxin VnMSGL-0111 of Conus ventricosus (Mediterranean cone).